Consider the following 127-residue polypeptide: MNIPADLLYTKDHEWIKVLDDGTTALVGITDFAQSELGDIVFVETKPVGTELSEHDVFGTVEAVKTVADLFAPVDGVIVEVNEALDAAEVVNSSPYEDGWMVKVSLKDASQFDALMSAAEYSEMVGE.

A Lipoyl-binding domain is found at 24–105; it reads TALVGITDFA…YEDGWMVKVS (82 aa). An N6-lipoyllysine modification is found at Lys-65.

The protein belongs to the GcvH family. In terms of assembly, the glycine cleavage system is composed of four proteins: P, T, L and H. Requires (R)-lipoate as cofactor.

In terms of biological role, the glycine cleavage system catalyzes the degradation of glycine. The H protein shuttles the methylamine group of glycine from the P protein to the T protein. The polypeptide is Glycine cleavage system H protein (Prosthecochloris aestuarii (strain DSM 271 / SK 413)).